The primary structure comprises 789 residues: Protein FLOWERING LOCUS D (789 aa).

Residues 1-23 (MVSFSAPKKRRRGRSQRSMSSLN) form a disordered region. Residues 76-177 (NKEATTEALL…FGIAQAIKDK (102 aa)) form the SWIRM domain. FAD is bound by residues Ser195, Glu214, Arg216, Arg222, and 240–243 (GGSV). Lys287 participates in a covalent cross-link: Glycyl lysine isopeptide (Lys-Gly) (interchain with G-Cter in SUMO). Residues Glu595, 604-605 (TM), and 607-612 (GAFVTG) contribute to the FAD site. Residues Lys693 and Lys770 each participate in a glycyl lysine isopeptide (Lys-Gly) (interchain with G-Cter in SUMO) cross-link.

It belongs to the flavin monoamine oxidase family. As to quaternary structure, interacts with HDA6. FAD serves as cofactor. In terms of processing, sumoylated at Lys-287, Lys-693 and Lys-770 by SIZ1. Sumoylation alters its activity and the histone H4 acetylation status of FLC locus, promoting FLC expression.

In terms of biological role, probable histone demethylase that promotes flowering independently of the photoperiod and vernalization pathways by repressing FLOWERING LOCUS C (FLC), a floral repressor that blocks the transition from vegetative to reproductive development. Probably mediates histone H3 'Lys-4' demethylation at FLC locus. Seems to act in partial redundancy with LDL1 and LDL2 to repress FLC expression. Required for histone H4 deacetylation of FLC locus. May be a component of the histone deacetylase complex. Forms a histone deacetylase complex with HDA5, HDA6 and MSI4/FVE that represses FLC gene expression to control flowering time. Required for systemic acquired resistance (SAR) toward pathogenic bacteria (e.g. Pseudomonas syringae pv tomato DC3000 (avrPto)). Together with FLD and MSI4/FVE, contributes to dehydroabietinal-dependent (DA, a diterpenoid tricyclic diterpene) activation of flowering ans SAR. In Arabidopsis thaliana (Mouse-ear cress), this protein is Protein FLOWERING LOCUS D.